A 249-amino-acid chain; its full sequence is Zinc import ATP-binding protein ZnuC (249 aa).

The ABC transporter domain occupies 1–219 (MRLVSLRNAT…PEYQALFGSG (219 aa)). An ATP-binding site is contributed by 36–43 (GPNGSGKS).

This sequence belongs to the ABC transporter superfamily. Zinc importer (TC 3.A.1.15.5) family. The complex is composed of two ATP-binding proteins (ZnuC), two transmembrane proteins (ZnuB) and a solute-binding protein (ZnuA).

The protein resides in the cell inner membrane. The enzyme catalyses Zn(2+)(out) + ATP(in) + H2O(in) = Zn(2+)(in) + ADP(in) + phosphate(in) + H(+)(in). Its function is as follows. Part of the ABC transporter complex ZnuABC involved in zinc import. Responsible for energy coupling to the transport system. This is Zinc import ATP-binding protein ZnuC from Ruegeria sp. (strain TM1040) (Silicibacter sp.).